Consider the following 226-residue polypeptide: MKPEPQSEAELMERAQDIAGLSFAELAEEAGMTVPENLKRDKGWVGQLLEWHLGAPAGSKPQQDFAKLGIELKSIPIGYSGKPLETTFVSVAPLTGVQGLTWETSHVRNKLSRVLWVPVEGEREIPLAERRVGSPLIWSPDQEEEQILKNDWEELMELIVLGKFDQISARHGEALHLRPKAANAKALTEAYSSNGKPIKTLPRGFYLRTQFTEQILLKHYINAQSE.

The protein belongs to the MutH family.

Its subcellular location is the cytoplasm. Sequence-specific endonuclease that cleaves unmethylated GATC sequences. It is involved in DNA mismatch repair. The chain is DNA mismatch repair protein MutH from Vibrio campbellii (strain ATCC BAA-1116).